The primary structure comprises 154 residues: Myoglobin (154 aa).

One can recognise a Globin domain in the interval 2-148 (VLSDGEWQLV…FRKDIAAKYK (147 aa)). Phosphoserine is present on Ser-4. Residue His-65 coordinates nitrite. His-65 contacts O2. Thr-68 bears the Phosphothreonine mark. Heme b is bound at residue His-94.

It belongs to the globin family. Monomeric.

It localises to the cytoplasm. Its subcellular location is the sarcoplasm. The catalysed reaction is Fe(III)-heme b-[protein] + nitric oxide + H2O = Fe(II)-heme b-[protein] + nitrite + 2 H(+). The enzyme catalyses H2O2 + AH2 = A + 2 H2O. Monomeric heme protein which primary function is to store oxygen and facilitate its diffusion within muscle tissues. Reversibly binds oxygen through a pentacoordinated heme iron and enables its timely and efficient release as needed during periods of heightened demand. Depending on the oxidative conditions of tissues and cells, and in addition to its ability to bind oxygen, it also has a nitrite reductase activity whereby it regulates the production of bioactive nitric oxide. Under stress conditions, like hypoxia and anoxia, it also protects cells against reactive oxygen species thanks to its pseudoperoxidase activity. The chain is Myoglobin from Balaena mysticetus (Bowhead whale).